Reading from the N-terminus, the 208-residue chain is Ribonuclease HII (208 aa).

The region spanning 5–198 (PLIAGVDEVG…CQPRLEHDCR (194 aa)) is the RNase H type-2 domain. D11, E12, and D106 together coordinate a divalent metal cation.

The protein belongs to the RNase HII family. The cofactor is Mn(2+). Mg(2+) is required as a cofactor.

The protein localises to the cytoplasm. The catalysed reaction is Endonucleolytic cleavage to 5'-phosphomonoester.. Endonuclease that specifically degrades the RNA of RNA-DNA hybrids. The polypeptide is Ribonuclease HII (Microcystis aeruginosa (strain NIES-843 / IAM M-2473)).